Here is a 172-residue protein sequence, read N- to C-terminus: NADH dehydrogenase [ubiquinone] 1 alpha subcomplex subunit 8 (172 aa).

CHCH domains lie at 33 to 74 and 75 to 118; these read GAQC…FRQI and KRHC…LGWV. Short sequence motifs (cx9C motif) lie at residues 36-46, 56-66, 78-88, and 100-110; these read CDKPNKEFMLC, CLEEGKLVNQC, CAEPFTEYWTC, and CRKQQAQFDEC. 4 disulfides stabilise this stretch: Cys36–Cys66, Cys46–Cys56, Cys78–Cys110, and Cys88–Cys100. Residues 133-159 form a disordered region; sequence TDRPLPENPYHSRARPEPNPEVEGDLK. Basic and acidic residues predominate over residues 146-159; that stretch reads ARPEPNPEVEGDLK.

Belongs to the complex I NDUFA8 subunit family. As to quaternary structure, complex I is composed of 45 different subunits.

Its subcellular location is the mitochondrion inner membrane. It is found in the mitochondrion intermembrane space. It localises to the mitochondrion. Functionally, accessory subunit of the mitochondrial membrane respiratory chain NADH dehydrogenase (Complex I), that is believed not to be involved in catalysis. Complex I functions in the transfer of electrons from NADH to the respiratory chain. The immediate electron acceptor for the enzyme is believed to be ubiquinone. This Bos taurus (Bovine) protein is NADH dehydrogenase [ubiquinone] 1 alpha subcomplex subunit 8 (NDUFA8).